A 273-amino-acid polypeptide reads, in one-letter code: MLTKRIIPCLDVTLDASGGTVVKGVEFVDLKKAGDPVDLAKRYNEQGADELVFLDITASHEGRSTMIDVIERTANEVFIPLTVGGGINSVEDVRQILRAGADKVSVNTAAVKNPEFIREASNIFGSQCIVTAIDCKRNLDVENNQDKTILELEDGTLAWYEVVIYGGREPTGLDTVQWAKKVEELGSGEILLTSMNRDGTYDGFDIPITKKLSEELDIPIIASGGVGNPEHMYKGFVDGKADAGLAASIFHFGEYTVRDVKEALRAKNIPVRL.

Residues Asp11 and Asp134 contribute to the active site.

It belongs to the HisA/HisF family. In terms of assembly, heterodimer of HisH and HisF.

It is found in the cytoplasm. The catalysed reaction is 5-[(5-phospho-1-deoxy-D-ribulos-1-ylimino)methylamino]-1-(5-phospho-beta-D-ribosyl)imidazole-4-carboxamide + L-glutamine = D-erythro-1-(imidazol-4-yl)glycerol 3-phosphate + 5-amino-1-(5-phospho-beta-D-ribosyl)imidazole-4-carboxamide + L-glutamate + H(+). It participates in amino-acid biosynthesis; L-histidine biosynthesis; L-histidine from 5-phospho-alpha-D-ribose 1-diphosphate: step 5/9. In terms of biological role, IGPS catalyzes the conversion of PRFAR and glutamine to IGP, AICAR and glutamate. The HisF subunit catalyzes the cyclization activity that produces IGP and AICAR from PRFAR using the ammonia provided by the HisH subunit. In Methanococcoides burtonii (strain DSM 6242 / NBRC 107633 / OCM 468 / ACE-M), this protein is Imidazole glycerol phosphate synthase subunit HisF.